Consider the following 230-residue polypeptide: MPIYQLIDELVFPPLDHAEPGGLLAVGGDLSPRRLLLAYSMGIFPWFNADDPILWWSPDPRCVLALSAFYLNRSLSKELRRGRYEVTFDKAFSEVIRACARTPRKEGPGTWITGDMLKAYELLHGLGYAHSVEAWYEGCLVGGLYGVALGGCFFGESMFHCMPNASKVAFATLVRHLAMLGYHLIDCQQSSRHLLSMGATEVPRAEFLQLLQNAGVHPSTLPPKGKFPSR.

Belongs to the L/F-transferase family.

The protein localises to the cytoplasm. The catalysed reaction is N-terminal L-lysyl-[protein] + L-leucyl-tRNA(Leu) = N-terminal L-leucyl-L-lysyl-[protein] + tRNA(Leu) + H(+). It catalyses the reaction N-terminal L-arginyl-[protein] + L-leucyl-tRNA(Leu) = N-terminal L-leucyl-L-arginyl-[protein] + tRNA(Leu) + H(+). It carries out the reaction L-phenylalanyl-tRNA(Phe) + an N-terminal L-alpha-aminoacyl-[protein] = an N-terminal L-phenylalanyl-L-alpha-aminoacyl-[protein] + tRNA(Phe). Its function is as follows. Functions in the N-end rule pathway of protein degradation where it conjugates Leu, Phe and, less efficiently, Met from aminoacyl-tRNAs to the N-termini of proteins containing an N-terminal arginine or lysine. In Syntrophotalea carbinolica (strain DSM 2380 / NBRC 103641 / GraBd1) (Pelobacter carbinolicus), this protein is Leucyl/phenylalanyl-tRNA--protein transferase.